The following is a 141-amino-acid chain: N,N-dimethylformamidase alpha subunit (141 aa).

As to quaternary structure, heterotetramer of two DmfA1 (alpha) and two DmfA2 (beta) subunits.

It catalyses the reaction N,N-dimethylformamide + H2O = dimethylamine + formate. Hydrolyzes N,N-dimethylformamide, and to a lesser extent N,N-dimethylacetamide and N,N-diethylacetamide. Has no activity against the substituted amides N-methylformamide, N-ethylformamide, N-ethylformamide and N-methylacetamide or the unsubstituted amides formamide, nicotinamide, acetoamide, benzamide, acetamide and acrylamide. The polypeptide is N,N-dimethylformamidase alpha subunit (Paracoccus aminophilus).